We begin with the raw amino-acid sequence, 178 residues long: MGAFRFHQYQVVGRGLPTPTDEHPKIYRMKLWATNEVRAKSKFWYFLRKLKKVKKSNGQILAINEIFEKNPTTIKNYGIWLRYQSRTGYHNMYKEYRDTTLNGAVEQMYTEMASRHRVRFPCIQIIKTATVHFKLCKRDNTKQFHKSDIKFPLVYRKVRPPTRKLKTTFKASRPNLFM.

The protein belongs to the eukaryotic ribosomal protein eL20 family.

This Oryza sativa subsp. japonica (Rice) protein is Large ribosomal subunit protein eL20 (RPL18A).